A 208-amino-acid polypeptide reads, in one-letter code: Thymidylate kinase (208 aa).

Gly-10–Ser-17 contributes to the ATP binding site.

This sequence belongs to the thymidylate kinase family.

The enzyme catalyses dTMP + ATP = dTDP + ADP. In terms of biological role, phosphorylation of dTMP to form dTDP in both de novo and salvage pathways of dTTP synthesis. The chain is Thymidylate kinase from Bacillus cytotoxicus (strain DSM 22905 / CIP 110041 / 391-98 / NVH 391-98).